The chain runs to 348 residues: Putative S-adenosyl-L-methionine-dependent methyltransferase MRA_3439 (348 aa).

Residues D171 and 200–201 (DL) contribute to the S-adenosyl-L-methionine site.

This sequence belongs to the UPF0677 family.

In terms of biological role, exhibits S-adenosyl-L-methionine-dependent methyltransferase activity. The chain is Putative S-adenosyl-L-methionine-dependent methyltransferase MRA_3439 from Mycobacterium tuberculosis (strain ATCC 25177 / H37Ra).